The sequence spans 591 residues: Aspartate--tRNA(Asp/Asn) ligase (591 aa).

Glu174 contributes to the L-aspartate binding site. Residues 198–201 (QLFK) are aspartate. L-aspartate is bound at residue Arg220. Residues 220–222 (RDE) and Gln229 contribute to the ATP site. Position 450 (His450) interacts with L-aspartate. Glu483 is an ATP binding site. Arg490 is an L-aspartate binding site. Residue 535–538 (GLDR) participates in ATP binding.

It belongs to the class-II aminoacyl-tRNA synthetase family. Type 1 subfamily. In terms of assembly, homodimer.

It is found in the cytoplasm. The catalysed reaction is tRNA(Asx) + L-aspartate + ATP = L-aspartyl-tRNA(Asx) + AMP + diphosphate. In terms of biological role, aspartyl-tRNA synthetase with relaxed tRNA specificity since it is able to aspartylate not only its cognate tRNA(Asp) but also tRNA(Asn). Reaction proceeds in two steps: L-aspartate is first activated by ATP to form Asp-AMP and then transferred to the acceptor end of tRNA(Asp/Asn). This Pseudomonas syringae pv. tomato (strain ATCC BAA-871 / DC3000) protein is Aspartate--tRNA(Asp/Asn) ligase.